Reading from the N-terminus, the 143-residue chain is Transcriptional regulator MraZ (143 aa).

SpoVT-AbrB domains are found at residues 5-47 (TYTP…PREE) and 76-119 (TDEQ…DAQA).

The protein belongs to the MraZ family. In terms of assembly, forms oligomers.

The protein localises to the cytoplasm. The protein resides in the nucleoid. The chain is Transcriptional regulator MraZ from Rhodococcus opacus (strain B4).